A 108-amino-acid chain; its full sequence is Con-Ins K1 (108 aa).

Residues 1–24 (MTTSSYFLLVALGLLLYVCQSSFG) form the signal peptide. Residues 25–28 (SPHT) constitute a propeptide that is removed on maturation. 3 cysteine pairs are disulfide-bonded: Cys-41-Cys-90, Cys-53-Cys-103, and Cys-89-Cys-94. Glu-44 is subject to 4-carboxyglutamate. Positions 57–83 (RKRRGFPSMLKARAKRNEAFLLQRDGR) are cleaved as a propeptide — c peptide. The residue at position 87 (Glu-87) is a 4-carboxyglutamate. Gln-107 is modified (glutamine amide).

This sequence belongs to the insulin family. In terms of assembly, heterodimer of A and B chains; disulfide-linked. As to expression, expressed by the venom gland.

The protein localises to the secreted. In terms of biological role, this venom insulin, from a fish-hunting cone snail, facilitates prey capture by rapidly inducing hypoglycemic shock. It is one of the smallest known insulin found in nature and lacks the C-terminal segment of the B chain that, in human insulin, mediates engagement of the insulin receptor (INSR) and assembly of the hormone's hexameric storage form. Despite lacking this segment, it both binds and activates human insulin receptor (long isoform (HIR-B)) with a moderate potency (EC(50)=30.45 nM). In vivo, intraperitoneal injection of this peptide into zebrafish lowers blood glucose with a lower potency than human insulin. In addition, when applied to water, this peptide reduces overall locomotor activity of zebrafish larvae, observed as a significant decrease in the percentage of time spent swimming and movement frequency. When tested on a mouse model of diabetes, this insulin also lowers blood glucose with a 20-fold lower potency than human insulin. This Conus kinoshitai (Kinoshita's cone) protein is Con-Ins K1.